Consider the following 283-residue polypeptide: 1-deoxypentalenic acid 11-beta-hydroxylase (283 aa).

Arginine 117 contacts substrate. Positions 135 and 137 each coordinate Fe cation. Residues 135 to 137 (HQD) and tryptophan 151 each bind 2-oxoglutarate. Residue arginine 186 coordinates substrate. Histidine 224 contributes to the Fe cation binding site. 2-oxoglutarate is bound by residues serine 226 and arginine 238. A disordered region spans residues 260–283 (WPESAKDASKGILSKITGTPTTAE).

This sequence belongs to the PhyH family. Requires Fe cation as cofactor. L-ascorbate is required as a cofactor.

It catalyses the reaction 1-deoxypentalenate + 2-oxoglutarate + O2 = 1-deoxy-11beta-hydroxypentalenate + succinate + CO2. The protein operates within antibiotic biosynthesis; pentalenolactone biosynthesis. Its function is as follows. Catalyzes the conversion of 1-deoxypentalenic acid to 11-beta-hydroxy-1-deoxypentalenic acid in the biosynthesis of pentalenolactone antibiotic. The polypeptide is 1-deoxypentalenic acid 11-beta-hydroxylase (penH) (Streptomyces exfoliatus (Streptomyces hydrogenans)).